The chain runs to 226 residues: Urease accessory protein UreF (226 aa).

It belongs to the UreF family. UreD, UreF and UreG form a complex that acts as a GTP-hydrolysis-dependent molecular chaperone, activating the urease apoprotein by helping to assemble the nickel containing metallocenter of UreC. The UreE protein probably delivers the nickel.

It localises to the cytoplasm. Required for maturation of urease via the functional incorporation of the urease nickel metallocenter. The sequence is that of Urease accessory protein UreF from Nitrosospira multiformis (strain ATCC 25196 / NCIMB 11849 / C 71).